Consider the following 268-residue polypeptide: Nickel import ATP-binding protein NikE (268 aa).

The region spanning 4–252 (LNVSDLSHHY…SSDAGRVLQN (249 aa)) is the ABC transporter domain. 45-52 (GRSGCGKS) is a binding site for ATP.

It belongs to the ABC transporter superfamily. Nickel importer (TC 3.A.1.5.3) family. The complex is composed of two ATP-binding proteins (NikD and NikE), two transmembrane proteins (NikB and NikC) and a solute-binding protein (NikA).

It localises to the cell inner membrane. It carries out the reaction Ni(2+)(out) + ATP + H2O = Ni(2+)(in) + ADP + phosphate + H(+). In terms of biological role, part of the ABC transporter complex NikABCDE involved in nickel import. Responsible for energy coupling to the transport system. This Escherichia coli O6:K15:H31 (strain 536 / UPEC) protein is Nickel import ATP-binding protein NikE.